We begin with the raw amino-acid sequence, 252 residues long: Zinc finger CCCH domain-containing protein 28 (252 aa).

A compositionally biased stretch (basic and acidic residues) spans 1 to 21 (MSHRRDYGSDAVHVRITHDPP). Positions 1 to 31 (MSHRRDYGSDAVHVRITHDPPPENCFPNSGD) are disordered. 2 consecutive C3H1-type zinc fingers follow at residues 71-99 (FFKTKLCFKFRAGTCPYSASSCHFAHSAE) and 143-171 (NWKTRICNKWQTTGYCPFGSHCHFAHGPS).

In Arabidopsis thaliana (Mouse-ear cress), this protein is Zinc finger CCCH domain-containing protein 28.